Consider the following 346-residue polypeptide: Cell division protein FtsZ 2 (346 aa).

GTP contacts are provided by residues 23 to 27 (GGGGN), 110 to 112 (GTG), Glu141, Arg145, and Asp189. The tract at residues 320-346 (SNRSAQPTAPEAMNGQTAAAVPSRTLQ) is disordered.

This sequence belongs to the FtsZ family. As to quaternary structure, homodimer. Polymerizes to form a dynamic ring structure in a strictly GTP-dependent manner. Interacts directly with several other division proteins.

Its subcellular location is the cytoplasm. Essential cell division protein that forms a contractile ring structure (Z ring) at the future cell division site. The regulation of the ring assembly controls the timing and the location of cell division. One of the functions of the FtsZ ring is to recruit other cell division proteins to the septum to produce a new cell wall between the dividing cells. Binds GTP and shows GTPase activity. In Rhizobium meliloti (strain 1021) (Ensifer meliloti), this protein is Cell division protein FtsZ 2.